We begin with the raw amino-acid sequence, 334 residues long: tRNA dimethylallyltransferase (334 aa).

22-29 (GPTASGKT) lines the ATP pocket. 24-29 (TASGKT) serves as a coordination point for substrate.

This sequence belongs to the IPP transferase family. Monomer. The cofactor is Mg(2+).

The catalysed reaction is adenosine(37) in tRNA + dimethylallyl diphosphate = N(6)-dimethylallyladenosine(37) in tRNA + diphosphate. Catalyzes the transfer of a dimethylallyl group onto the adenine at position 37 in tRNAs that read codons beginning with uridine, leading to the formation of N6-(dimethylallyl)adenosine (i(6)A). This Rhodopirellula baltica (strain DSM 10527 / NCIMB 13988 / SH1) protein is tRNA dimethylallyltransferase.